Here is a 566-residue protein sequence, read N- to C-terminus: Urease subunit alpha (566 aa).

A Urease domain is found at 128 to 566; that stretch reads GGVDTHIHFI…LPMAQRYFLF (439 aa). Ni(2+)-binding residues include His133, His135, and Lys216. Lys216 is subject to N6-carboxylysine. His218 is a substrate binding site. Ni(2+)-binding residues include His245 and His271. Catalysis depends on His319, which acts as the Proton donor. Asp359 is a Ni(2+) binding site.

The protein belongs to the metallo-dependent hydrolases superfamily. Urease alpha subunit family. As to quaternary structure, may form a heterohexamer of 3 UreC (alpha) and 3 UreAB (gamma/beta) subunits. May also form a heterotrimer of UreA (gamma), UreB (beta) and UreC (alpha) subunits. Three heterotrimers associate to form the active enzyme. It depends on Ni cation as a cofactor. Post-translationally, carboxylation allows a single lysine to coordinate two nickel ions.

Its subcellular location is the cytoplasm. It catalyses the reaction urea + 2 H2O + H(+) = hydrogencarbonate + 2 NH4(+). It functions in the pathway nitrogen metabolism; urea degradation; CO(2) and NH(3) from urea (urease route): step 1/1. The sequence is that of Urease subunit alpha from Pseudomonas syringae pv. tomato (strain ATCC BAA-871 / DC3000).